Reading from the N-terminus, the 595-residue chain is Beta-hexosaminidase 1 (595 aa).

The N-terminal stretch at 1–20 (MRFAYLATLAGSLLAGLAQA) is a signal peptide. Residue asparagine 313 is glycosylated (N-linked (GlcNAc...) asparagine).

It belongs to the glycosyl hydrolase 20 family.

The catalysed reaction is Hydrolysis of terminal non-reducing N-acetyl-D-hexosamine residues in N-acetyl-beta-D-hexosaminides.. Functionally, beta-hexosaminidase that shows a broad substrate specificity. The chain is Beta-hexosaminidase 1 from Coccidioides posadasii (strain RMSCC 757 / Silveira) (Valley fever fungus).